A 452-amino-acid chain; its full sequence is tRNA modification GTPase MnmE (452 aa).

Positions 21, 78, and 118 each coordinate (6S)-5-formyl-5,6,7,8-tetrahydrofolate. The 162-residue stretch at 214–375 (GMKVVIAGRP…LREHLKQSMG (162 aa)) folds into the TrmE-type G domain. N224 serves as a coordination point for K(+). GTP contacts are provided by residues 224–229 (NAGKSS), 243–249 (TDIAGTT), and 268–271 (DTAG). S228 lines the Mg(2+) pocket. K(+) is bound by residues T243, I245, and T248. T249 contributes to the Mg(2+) binding site. (6S)-5-formyl-5,6,7,8-tetrahydrofolate is bound at residue K452.

This sequence belongs to the TRAFAC class TrmE-Era-EngA-EngB-Septin-like GTPase superfamily. TrmE GTPase family. As to quaternary structure, homodimer. Heterotetramer of two MnmE and two MnmG subunits. It depends on K(+) as a cofactor.

Its subcellular location is the cytoplasm. Its function is as follows. Exhibits a very high intrinsic GTPase hydrolysis rate. Involved in the addition of a carboxymethylaminomethyl (cmnm) group at the wobble position (U34) of certain tRNAs, forming tRNA-cmnm(5)s(2)U34. This is tRNA modification GTPase MnmE from Actinobacillus succinogenes (strain ATCC 55618 / DSM 22257 / CCUG 43843 / 130Z).